A 273-amino-acid chain; its full sequence is MAIIKCKPTSPGRRHAIKVVNPSLYKGKPISSLIRKNSKSGGRNNCGRITTRHIGGRHKRFYRIIDFKRNKDNIPAIVERLEYDPNRSSNIALILYSDGDRRYILASKGLMVGSKIVSGFNAEIKIGNALPMKNIPIGTVIHNVEIKPGKGGQIARSAGTYVQLISRENSYVTIRLRSGETRKLESKCRATIGEVGNSESMLRVLGKAGASRWRGIRPTVRGTAMNPVDHPHGGGEGRNFGKHPVSPWGLQTKGKKTRKNKRTEKFIIRHRHK.

The tract at residues 221-263 (RGTAMNPVDHPHGGGEGRNFGKHPVSPWGLQTKGKKTRKNKRT) is disordered. Residues 253–263 (KGKKTRKNKRT) are compositionally biased toward basic residues.

Belongs to the universal ribosomal protein uL2 family. As to quaternary structure, part of the 50S ribosomal subunit. Forms a bridge to the 30S subunit in the 70S ribosome.

In terms of biological role, one of the primary rRNA binding proteins. Required for association of the 30S and 50S subunits to form the 70S ribosome, for tRNA binding and peptide bond formation. It has been suggested to have peptidyltransferase activity; this is somewhat controversial. Makes several contacts with the 16S rRNA in the 70S ribosome. The polypeptide is Large ribosomal subunit protein uL2 (Buchnera aphidicola subsp. Baizongia pistaciae (strain Bp)).